Here is a 482-residue protein sequence, read N- to C-terminus: NADH-quinone oxidoreductase subunit N (482 aa).

The next 13 helical transmembrane spans lie at 10-30 (ALGP…LILY), 44-64 (VGAI…PLGA), 77-97 (GFAR…LLLA), 113-133 (ILIV…DLIG), 166-186 (FVLG…VYGF), 206-226 (LGLV…LAAV), 243-265 (VTAF…VFIG), 277-296 (IIVF…AIGQ), 302-322 (LMAY…AAGT), 328-348 (GVVV…AVIL), 374-394 (AFCL…AGFF), 397-417 (FYVF…IGVV), and 451-471 (IVLA…APLV).

It belongs to the complex I subunit 2 family. In terms of assembly, NDH-1 is composed of 14 different subunits. Subunits NuoA, H, J, K, L, M, N constitute the membrane sector of the complex.

The protein resides in the cell inner membrane. The catalysed reaction is a quinone + NADH + 5 H(+)(in) = a quinol + NAD(+) + 4 H(+)(out). Its function is as follows. NDH-1 shuttles electrons from NADH, via FMN and iron-sulfur (Fe-S) centers, to quinones in the respiratory chain. The immediate electron acceptor for the enzyme in this species is believed to be ubiquinone. Couples the redox reaction to proton translocation (for every two electrons transferred, four hydrogen ions are translocated across the cytoplasmic membrane), and thus conserves the redox energy in a proton gradient. This chain is NADH-quinone oxidoreductase subunit N, found in Methylobacterium nodulans (strain LMG 21967 / CNCM I-2342 / ORS 2060).